The primary structure comprises 451 residues: Chaperone SurA (451 aa).

The signal sequence occupies residues 1–26 (MKKIIPTNLFKLISILFILTPFFAWS). 2 PpiC domains span residues 179–280 (DVEY…QLQG) and 290–388 (KQYH…FLDG).

It is found in the periplasm. It catalyses the reaction [protein]-peptidylproline (omega=180) = [protein]-peptidylproline (omega=0). In terms of biological role, chaperone involved in the correct folding and assembly of outer membrane proteins. Recognizes specific patterns of aromatic residues and the orientation of their side chains, which are found more frequently in integral outer membrane proteins. May act in both early periplasmic and late outer membrane-associated steps of protein maturation. This Hydrogenovibrio crunogenus (strain DSM 25203 / XCL-2) (Thiomicrospira crunogena) protein is Chaperone SurA.